Here is a 344-residue protein sequence, read N- to C-terminus: Melanocyte-stimulating hormone receptor (344 aa).

Residues 1–37 lie on the Extracellular side of the membrane; sequence MPMQGAQRKLLGSLNSTPTATSNLGLAANHTGAPCLE. Asn-29 carries N-linked (GlcNAc...) asparagine glycosylation. A helical transmembrane segment spans residues 38 to 63; the sequence is VSIPDGLFLSLGLVSLVENVLVVAAI. Topologically, residues 64 to 72 are cytoplasmic; the sequence is AKNRNLHSS. A helical transmembrane segment spans residues 73–93; the sequence is MYCFICCLALSDLLVSGSNML. Over 94–118 the chain is Extracellular; that stretch reads ETAIILLLEAGTLATRASVVQQLHN. Residues 119-140 traverse the membrane as a helical segment; the sequence is TIDVLTCSSMLCSLCFLGAIAV. Residues 141-163 lie on the Cytoplasmic side of the membrane; it reads DRYISIFYALRYHSIMTLPRAQR. The helical transmembrane segment at 164–183 threads the bilayer; it reads AIAAIWVTSVLSSTLFITYY. The Extracellular portion of the chain corresponds to 184-191; it reads DHAAVLLC. The helical transmembrane segment at 192–211 threads the bilayer; it reads LVVFFLAMLVLMAVLYVHML. The Cytoplasmic portion of the chain corresponds to 212–240; that stretch reads ARACQHAQGIIRLHNRQLPAHKGFGLRGA. The helical transmembrane segment at 241-266 threads the bilayer; it reads ATLTILLGIFFLCWGPFFLHLTLVVF. Topologically, residues 267–279 are extracellular; it reads CPQHLTCNCIFKN. Residues 280–300 form a helical membrane-spanning segment; sequence FKVFLTLIICNTIIDPLIYAF. The Cytoplasmic portion of the chain corresponds to 301-344; sequence RSQELRRTLKEVLLCSWWPGCGAEGGGDSVWPGSCVTLRGPLPP. Cys-315 is lipidated: S-palmitoyl cysteine.

Belongs to the G-protein coupled receptor 1 family. Interacts with MGRN1, but does not undergo MGRN1-mediated ubiquitination; this interaction competes with GNAS-binding and thus inhibits agonist-induced cAMP production. Interacts with OPN3; the interaction results in a decrease in MC1R-mediated cAMP signaling and ultimately a decrease in melanin production in melanocytes.

The protein localises to the cell membrane. In terms of biological role, receptor for MSH (alpha, beta and gamma) and ACTH. The activity of this receptor is mediated by G proteins which activate adenylate cyclase. Mediates melanogenesis, the production of eumelanin (black/brown) and phaeomelanin (red/yellow), via regulation of cAMP signaling in melanocytes. In Mico argentatus (Silvery marmoset), this protein is Melanocyte-stimulating hormone receptor (MC1R).